A 312-amino-acid polypeptide reads, in one-letter code: Serine/threonine-protein phosphatase CPPED1 (312 aa).

The residue at position 2 (S2) is a Phosphoserine. The tract at residues 47 to 250 is catalytic; it reads KAWSTGNCDN…AVFSGHYHRN (204 aa). A divalent metal cation is bound by residues D90, N127, and H246. Phosphoserine is present on S293.

It belongs to the metallophosphoesterase superfamily. CPPED1 family. A divalent metal cation serves as cofactor.

It localises to the cytoplasm. It catalyses the reaction O-phospho-L-seryl-[protein] + H2O = L-seryl-[protein] + phosphate. The catalysed reaction is O-phospho-L-threonyl-[protein] + H2O = L-threonyl-[protein] + phosphate. Its function is as follows. Protein phosphatase that dephosphorylates AKT family kinase specifically at 'Ser-473', blocking cell cycle progression and promoting cell apoptosis. May play an inhibitory role in glucose uptake by adipocytes. The polypeptide is Serine/threonine-protein phosphatase CPPED1 (Cpped1) (Rattus norvegicus (Rat)).